Consider the following 360-residue polypeptide: Membrane-bound lytic murein transglycosylase C (360 aa).

A signal peptide spans 1–16 (MKKLLALAVIAPLLIS). The N-palmitoyl cysteine moiety is linked to residue Cys-17. Cys-17 carries S-diacylglycerol cysteine lipidation.

The protein belongs to the transglycosylase Slt family.

Its subcellular location is the cell outer membrane. It catalyses the reaction Exolytic cleavage of the (1-&gt;4)-beta-glycosidic linkage between N-acetylmuramic acid (MurNAc) and N-acetylglucosamine (GlcNAc) residues in peptidoglycan, from either the reducing or the non-reducing ends of the peptidoglycan chains, with concomitant formation of a 1,6-anhydrobond in the MurNAc residue.. In terms of biological role, murein-degrading enzyme. May play a role in recycling of muropeptides during cell elongation and/or cell division. The chain is Membrane-bound lytic murein transglycosylase C from Salmonella arizonae (strain ATCC BAA-731 / CDC346-86 / RSK2980).